Here is a 408-residue protein sequence, read N- to C-terminus: Innexin-12 (408 aa).

A helical transmembrane segment spans residues 29-49 (TIGLVLASAFITGWSFVGSPI). Asparagine 99 is a glycosylation site (N-linked (GlcNAc...) asparagine). 3 helical membrane passes run 113 to 133 (QWVPFILALQAMLFYFPVVIW), 197 to 217 (VITSYLFMKALFLINVLFQFV), and 284 to 304 (IFVALWWWLCFLTVVTITNTI).

The protein belongs to the pannexin family.

It is found in the cell membrane. The protein resides in the cell junction. The protein localises to the gap junction. Functionally, structural component of the gap junctions. Plays a role in oocyte directional transit in the spermatheca during ovulation by facilitating the directional propagation of the calcium signal in the spermatheca. Plays a role in male tail tip morphogenesis. The sequence is that of Innexin-12 from Caenorhabditis elegans.